Reading from the N-terminus, the 683-residue chain is Methionine--tRNA ligase (683 aa).

The 'HIGH' region motif lies at 14–24; that stretch reads PYANGSIHLGH. Zn(2+) is bound by residues cysteine 145, cysteine 148, cysteine 158, and cysteine 161. The 'KMSKS' region signature appears at 331–335; sequence KMSKS. An ATP-binding site is contributed by lysine 334. The tRNA-binding domain occupies 581–683; sequence AFAAVDLRVA…SGAKPGQRIK (103 aa).

The protein belongs to the class-I aminoacyl-tRNA synthetase family. MetG type 1 subfamily. Homodimer. Zn(2+) serves as cofactor.

The protein localises to the cytoplasm. It carries out the reaction tRNA(Met) + L-methionine + ATP = L-methionyl-tRNA(Met) + AMP + diphosphate. Functionally, is required not only for elongation of protein synthesis but also for the initiation of all mRNA translation through initiator tRNA(fMet) aminoacylation. This is Methionine--tRNA ligase from Pseudomonas fluorescens (strain SBW25).